The chain runs to 1072 residues: Carbamoyl phosphate synthase large chain (1072 aa).

Residues 1-401 are carboxyphosphate synthetic domain; the sequence is MPKRLDINTI…SLLKAVRSLE (401 aa). ATP-binding residues include Arg129, Arg169, Gly175, Gly176, Lys208, Ile210, Glu215, Gly241, Val242, His243, Gln284, and Glu298. Residues 133–327 form the ATP-grasp 1 domain; it reads RTLMQELNEP…IAKLAAKIAV (195 aa). Mg(2+) is bound by residues Gln284, Glu298, and Asn300. Residues Gln284, Glu298, and Asn300 each coordinate Mn(2+). The interval 402–546 is oligomerization domain; that stretch reads LGIYHLELNH…YSTYGDENES (145 aa). The segment at 547–929 is carbamoyl phosphate synthetic domain; it reads IVTERKSVMV…ALYKGLVAAG (383 aa). An ATP-grasp 2 domain is found at 671 to 861; the sequence is EAALTELGIP…MANIATKVIL (191 aa). ATP-binding residues include Arg707, Arg746, Glu752, Gly777, Val778, His779, Ser780, Gln820, and Glu832. Mg(2+)-binding residues include Gln820, Glu832, and Asn834. The Mn(2+) site is built by Gln820, Glu832, and Asn834. The region spanning 930–1072 is the MGS-like domain; it reads ISIPTHGSVI…PTTRHEVVHA (143 aa). Residues 930 to 1072 are allosteric domain; that stretch reads ISIPTHGSVI…PTTRHEVVHA (143 aa).

Belongs to the CarB family. In terms of assembly, composed of two chains; the small (or glutamine) chain promotes the hydrolysis of glutamine to ammonia, which is used by the large (or ammonia) chain to synthesize carbamoyl phosphate. Tetramer of heterodimers (alpha,beta)4. Requires Mg(2+) as cofactor. Mn(2+) serves as cofactor.

The catalysed reaction is hydrogencarbonate + L-glutamine + 2 ATP + H2O = carbamoyl phosphate + L-glutamate + 2 ADP + phosphate + 2 H(+). It catalyses the reaction hydrogencarbonate + NH4(+) + 2 ATP = carbamoyl phosphate + 2 ADP + phosphate + 2 H(+). It participates in amino-acid biosynthesis; L-arginine biosynthesis; carbamoyl phosphate from bicarbonate: step 1/1. Its pathway is pyrimidine metabolism; UMP biosynthesis via de novo pathway; (S)-dihydroorotate from bicarbonate: step 1/3. In terms of biological role, large subunit of the glutamine-dependent carbamoyl phosphate synthetase (CPSase). CPSase catalyzes the formation of carbamoyl phosphate from the ammonia moiety of glutamine, carbonate, and phosphate donated by ATP, constituting the first step of 2 biosynthetic pathways, one leading to arginine and/or urea and the other to pyrimidine nucleotides. The large subunit (synthetase) binds the substrates ammonia (free or transferred from glutamine from the small subunit), hydrogencarbonate and ATP and carries out an ATP-coupled ligase reaction, activating hydrogencarbonate by forming carboxy phosphate which reacts with ammonia to form carbamoyl phosphate. This chain is Carbamoyl phosphate synthase large chain, found in Bacillus cytotoxicus (strain DSM 22905 / CIP 110041 / 391-98 / NVH 391-98).